The primary structure comprises 685 residues: UvrABC system protein B (685 aa).

A Helicase ATP-binding domain is found at 30–188; sequence DGVLRGDRWQ…QELVSLHYIR (159 aa). Residue 43 to 50 coordinates ATP; that stretch reads GVTGSGKT. The short motif at 96 to 119 is the Beta-hairpin element; the sequence is YYDFYQPEAYLPALDKYIAKDLRI. One can recognise a Helicase C-terminal domain in the interval 435 to 597; sequence QIDDLLAEIR…ITPRSIRKSL (163 aa). Residues 641-676 enclose the UVR domain; the sequence is YAMVAELRLEMNEAAIQMEYEKAAYLRDEIARLMHG.

Belongs to the UvrB family. In terms of assembly, forms a heterotetramer with UvrA during the search for lesions. Interacts with UvrC in an incision complex.

The protein localises to the cytoplasm. Its function is as follows. The UvrABC repair system catalyzes the recognition and processing of DNA lesions. A damage recognition complex composed of 2 UvrA and 2 UvrB subunits scans DNA for abnormalities. Upon binding of the UvrA(2)B(2) complex to a putative damaged site, the DNA wraps around one UvrB monomer. DNA wrap is dependent on ATP binding by UvrB and probably causes local melting of the DNA helix, facilitating insertion of UvrB beta-hairpin between the DNA strands. Then UvrB probes one DNA strand for the presence of a lesion. If a lesion is found the UvrA subunits dissociate and the UvrB-DNA preincision complex is formed. This complex is subsequently bound by UvrC and the second UvrB is released. If no lesion is found, the DNA wraps around the other UvrB subunit that will check the other stand for damage. This is UvrABC system protein B from Chlorobium phaeobacteroides (strain DSM 266 / SMG 266 / 2430).